The primary structure comprises 891 residues: Aconitate hydratase A (891 aa).

[4Fe-4S] cluster-binding residues include Cys435, Cys501, and Cys504.

It belongs to the aconitase/IPM isomerase family. In terms of assembly, monomer. The cofactor is [4Fe-4S] cluster.

It carries out the reaction citrate = D-threo-isocitrate. The protein operates within carbohydrate metabolism; tricarboxylic acid cycle; isocitrate from oxaloacetate: step 2/2. In terms of biological role, catalyzes the reversible isomerization of citrate to isocitrate via cis-aconitate. The apo form of AcnA functions as a RNA-binding regulatory protein which plays a role as a maintenance or survival enzyme during nutritional or oxidative stress. During oxidative stress inactive AcnA apo-enzyme without iron sulfur clusters binds the acnA mRNA 3' UTRs (untranslated regions), stabilizes acnA mRNA and increases AcnA synthesis, thus mediating a post-transcriptional positive autoregulatory switch. AcnA also enhances the stability of the sodA transcript. This is Aconitate hydratase A from Escherichia coli (strain K12).